The chain runs to 178 residues: Ribosome maturation factor RimP (178 aa).

The protein belongs to the RimP family.

Its subcellular location is the cytoplasm. Its function is as follows. Required for maturation of 30S ribosomal subunits. This is Ribosome maturation factor RimP from Mycolicibacterium paratuberculosis (strain ATCC BAA-968 / K-10) (Mycobacterium paratuberculosis).